The primary structure comprises 377 residues: Nitric oxide reductase FlRd-NAD(+) reductase (377 aa).

It belongs to the FAD-dependent oxidoreductase family. Requires FAD as cofactor.

The protein localises to the cytoplasm. It carries out the reaction 2 reduced [nitric oxide reductase rubredoxin domain] + NAD(+) + H(+) = 2 oxidized [nitric oxide reductase rubredoxin domain] + NADH. Its pathway is nitrogen metabolism; nitric oxide reduction. Functionally, one of at least two accessory proteins for anaerobic nitric oxide (NO) reductase. Reduces the rubredoxin moiety of NO reductase. The polypeptide is Nitric oxide reductase FlRd-NAD(+) reductase (Salmonella dublin (strain CT_02021853)).